A 65-amino-acid chain; its full sequence is KNRPTFCNLLPETGRCNALIPAFYYNSHLHKCQKFNYGGCGGNANNFKTIDECQRTCAAKYGRSS.

A BPTI/Kunitz inhibitor domain is found at 7-57; that stretch reads CNLLPETGRCNALIPAFYYNSHLHKCQKFNYGGCGGNANNFKTIDECQRTC. Intrachain disulfides connect cysteine 7–cysteine 57, cysteine 16–cysteine 40, and cysteine 32–cysteine 53.

This sequence belongs to the venom Kunitz-type family. As to expression, expressed by the venom gland.

It localises to the secreted. Functionally, dual-function toxin that inhibits both serine proteases (high activity on chymotrypsin (Ki = 18 nM), and low activity on elastase) and voltage-gated potassium channels Kv1.3/KCNA3 (IC(50) = 120.0 nM). This chain is Kunitz-type serine protease inhibitor IX, found in Bungarus fasciatus (Banded krait).